A 272-amino-acid polypeptide reads, in one-letter code: tRNA uridine(34) hydroxylase (272 aa).

Positions 121–217 (SRSDVYTIDT…YFKSTGNINN (97 aa)) constitute a Rhodanese domain. The active-site Cysteine persulfide intermediate is the cysteine 177.

This sequence belongs to the TrhO family.

The enzyme catalyses uridine(34) in tRNA + AH2 + O2 = 5-hydroxyuridine(34) in tRNA + A + H2O. In terms of biological role, catalyzes oxygen-dependent 5-hydroxyuridine (ho5U) modification at position 34 in tRNAs. The chain is tRNA uridine(34) hydroxylase from Ehrlichia ruminantium (strain Welgevonden).